We begin with the raw amino-acid sequence, 600 residues long: MRLSQMLFVTLREDPAEAEIPSHKLLLRAGYIRRIGSGIYAYLPLMWRVLQKVSQIVRQEMNATGAQECLLPQLQPSELWKESGRWDTYTKAEGIMFALEDRQERELGLGPTHEEVITFIAREMIRSYRQLPVNLYQIQTKFRDEIRPRFGLMRGREFIMKDAYSFDTDPEGLKKTYQDMDKAYRNILRRCGLAFRAVDADSGAIGGSGSQEFMVLADAGEDEVLYTDDGKYAANVEKAVSLPPDEEPSPFKNYEKRETPNTDTIEKLAQFLKCSPTVVVKNILYEAVYDNGMIVLVLVNIRGDQEVNEVKLQNELVKLAPQYHAKTIIALKVPDESAQQKWAAKSLPLGYISPDLGDDYIQGSKEIASKFVRLVDKTVVELKNFVTGANEKGYHVLGANWGKEFKLPQLIVDVRTAKAGDRAVHDRTQTLQSARGIEVGHIFQLGTKYSHAMGATYTNEQGEEMPLVMGCYGIGVSRLAQSAVEQSYDKDGIIWPVAIAPYHAIVVIPNINDPQQVEVAEKLYTELNAAGIETLLDDRDERAGVKFKDSELVGIPYRIVTGRSLKEGKLEVVERATKKSQDIPIDEVVSTIQQWVKAAL.

This sequence belongs to the class-II aminoacyl-tRNA synthetase family. ProS type 1 subfamily. In terms of assembly, homodimer.

The protein localises to the cytoplasm. The enzyme catalyses tRNA(Pro) + L-proline + ATP = L-prolyl-tRNA(Pro) + AMP + diphosphate. In terms of biological role, catalyzes the attachment of proline to tRNA(Pro) in a two-step reaction: proline is first activated by ATP to form Pro-AMP and then transferred to the acceptor end of tRNA(Pro). As ProRS can inadvertently accommodate and process non-cognate amino acids such as alanine and cysteine, to avoid such errors it has two additional distinct editing activities against alanine. One activity is designated as 'pretransfer' editing and involves the tRNA(Pro)-independent hydrolysis of activated Ala-AMP. The other activity is designated 'posttransfer' editing and involves deacylation of mischarged Ala-tRNA(Pro). The misacylated Cys-tRNA(Pro) is not edited by ProRS. This chain is Proline--tRNA ligase, found in Gloeothece citriformis (strain PCC 7424) (Cyanothece sp. (strain PCC 7424)).